A 511-amino-acid chain; its full sequence is Cytochrome P450 monooxyhenase eriC (511 aa).

Residues 2–22 (VLADFISIPTVSIACLAVLGI) traverse the membrane as a helical segment. Cysteine 445 is a heme binding site.

It belongs to the cytochrome P450 family. It depends on heme as a cofactor.

It is found in the membrane. The enzyme catalyses erinacol + reduced [NADPH--hemoprotein reductase] + O2 = cyathadiol + oxidized [NADPH--hemoprotein reductase] + H2O + H(+). It functions in the pathway secondary metabolite biosynthesis. Its function is as follows. Cytochrome P450 monooxygenase; part of the gene cluster that mediates the biosynthesis of erinacines, cyathane-xylosides that show unique biological activities, including leishmanicidal activity, stimulating activity for nerve growth-factor synthesis, and agonistic activity toward the kappa opioid receptor. Within the pathway, eriC hydroxylates erinacol at C-15 of the seven-membered ring to yield cyathadiol. The first step of the erinacines biosynthesis pathway is catalyzed by the geranylgeranyl diphosphate (GGPP) synthase eriE via conversion of farnesyl pyrophosphate and isopentyl pyrophosphate into geranylgeranyl pyrophosphate (GGPP). GGPP is then substrate of the diterpene cyclase eriG for the production of cyatha-3,12-diene. The cytochrome P450 monooxygenase eriI then hydroxylates cyatha-3,12-diene at C-14 of the seven-membered ring to produce erinacol, which is further hydroxylated at C-15 by the cytochrome P450 monooxygenase eriC to yield cyathadiol. The cytochrome P450 monooxygenase eriA then catalyzes C-11 hydroxylation in the presence of the short chain dehydrogenase/reductase (SDR) eriH, which leads to the production of cyathatriol. The acetyltransferase eriL converts cyathatriol into 11-O-acetyl-cyathatriol. The SDR eriH catalyzes further oxidation of 11-O-acetyl-cyathatriol into 1-O-acetylcyathin A3. Finally, the glycosyl transferase eriJ tranfers xylose from UDP-xylose onto C-14 of 11-O-acetyl-cyathatriol to form eracine Q. EriJ is also able to convert 11-O-acetyl-cyathatriol to eracine Q2 by using UDP-D-glucose as cosubstrate, but at a lower rate. The sequence is that of Cytochrome P450 monooxyhenase eriC from Hericium erinaceus (Lion's mane mushroom).